The following is a 198-amino-acid chain: Sulfite reductase, dissimilatory-type subunit alpha (198 aa).

Positions 45, 64, 67, and 70 each coordinate [4Fe-4S] cluster. The 4Fe-4S ferredoxin-type domain occupies 55–83 (GTLSIDNKNCTRCMHCINTMPRALKIGDE).

As to quaternary structure, heterohexamer of two alpha, two beta and two gamma subunits.

In terms of biological role, part of the complex that catalyzes the reduction of sulfite to sulfide. The alpha and beta subunits may have arisen by gene duplication. They both bind 2 iron-sulfur clusters, but the alpha subunit seems to be catalytically inactive, due to substitutions along the putative substrate access channel, and because it binds sirohydrochlorin (the dematallated form of siroheme) instead of siroheme. This is Sulfite reductase, dissimilatory-type subunit alpha (dsrA) from Megalodesulfovibrio gigas (strain ATCC 19364 / DSM 1382 / NCIMB 9332 / VKM B-1759) (Desulfovibrio gigas).